The following is a 236-amino-acid chain: 2,3,4,5-tetrahydropyridine-2,6-dicarboxylate N-acetyltransferase (236 aa).

It belongs to the transferase hexapeptide repeat family. DapH subfamily.

It catalyses the reaction (S)-2,3,4,5-tetrahydrodipicolinate + acetyl-CoA + H2O = L-2-acetamido-6-oxoheptanedioate + CoA. It participates in amino-acid biosynthesis; L-lysine biosynthesis via DAP pathway; LL-2,6-diaminopimelate from (S)-tetrahydrodipicolinate (acetylase route): step 1/3. In terms of biological role, catalyzes the transfer of an acetyl group from acetyl-CoA to tetrahydrodipicolinate. The sequence is that of 2,3,4,5-tetrahydropyridine-2,6-dicarboxylate N-acetyltransferase from Listeria ivanovii.